The chain runs to 113 residues: MAGYRKLGLPTDQRRAMLRNLVTSLLKHGKIETTVTRAKETRSIAEKMITLGKRGDLHARRQALAFIQEELVVKNLFDNVAPKYAERNGGYTRMYKKGPRRGDGAEVVILELV.

This sequence belongs to the bacterial ribosomal protein bL17 family. In terms of assembly, part of the 50S ribosomal subunit. Contacts protein L32.

This chain is Large ribosomal subunit protein bL17, found in Clostridium botulinum (strain Alaska E43 / Type E3).